The sequence spans 496 residues: Fibronectin type III and SPRY domain-containing protein 1 (496 aa).

Positions 4–99 form a coiled coil; sequence QKEALRKIIT…ALESSEELLE (96 aa). One can recognise a COS domain in the interval 105–162; the sequence is LLATDSKDFPQAAKQIKDGVTMAPAFRLSLKAKVSDNMSHLMVDFAQERRMLQALTFL. One can recognise a Fibronectin type-III domain in the interval 164–268; that stretch reads VPSAPVIDLT…EPVTLETPAF (105 aa). Residues 268 to 477 form the B30.2/SPRY domain; sequence FMFRLDASTS…VTTGLQVPSS (210 aa). The segment at 301 to 336 is disordered; it reads KAREKDGKGRTASPVNSPARGTPSPKRMPSGRGGRD. An omega-N-methylarginine mark is found at Arg310 and Arg320.

As to quaternary structure, oligomerization is required for binding to microtubules.

It is found in the cytoplasm. The protein localises to the cytoskeleton. It localises to the microtubule organizing center. The protein resides in the centrosome. Its subcellular location is the nucleus. It is found in the cleavage furrow. Functionally, may be involved in microtubule organization and stabilization. This Bos taurus (Bovine) protein is Fibronectin type III and SPRY domain-containing protein 1 (FSD1).